A 388-amino-acid polypeptide reads, in one-letter code: tRNA 2-selenouridine synthase (388 aa).

The Rhodanese domain occupies 15-138; sequence FTADTPLIDV…ARQFLINTID (124 aa). Cysteine 98 acts as the S-selanylcysteine intermediate in catalysis.

This sequence belongs to the SelU family. Monomer.

The catalysed reaction is 5-methylaminomethyl-2-thiouridine(34) in tRNA + selenophosphate + (2E)-geranyl diphosphate + H2O + H(+) = 5-methylaminomethyl-2-selenouridine(34) in tRNA + (2E)-thiogeraniol + phosphate + diphosphate. It carries out the reaction 5-methylaminomethyl-2-thiouridine(34) in tRNA + (2E)-geranyl diphosphate = 5-methylaminomethyl-S-(2E)-geranyl-thiouridine(34) in tRNA + diphosphate. The enzyme catalyses 5-methylaminomethyl-S-(2E)-geranyl-thiouridine(34) in tRNA + selenophosphate + H(+) = 5-methylaminomethyl-2-(Se-phospho)selenouridine(34) in tRNA + (2E)-thiogeraniol. It catalyses the reaction 5-methylaminomethyl-2-(Se-phospho)selenouridine(34) in tRNA + H2O = 5-methylaminomethyl-2-selenouridine(34) in tRNA + phosphate. In terms of biological role, involved in the post-transcriptional modification of the uridine at the wobble position (U34) of tRNA(Lys), tRNA(Glu) and tRNA(Gln). Catalyzes the conversion of 2-thiouridine (S2U-RNA) to 2-selenouridine (Se2U-RNA). Acts in a two-step process involving geranylation of 2-thiouridine (S2U) to S-geranyl-2-thiouridine (geS2U) and subsequent selenation of the latter derivative to 2-selenouridine (Se2U) in the tRNA chain. In Nitrosomonas eutropha (strain DSM 101675 / C91 / Nm57), this protein is tRNA 2-selenouridine synthase.